We begin with the raw amino-acid sequence, 340 residues long: Glycerol-3-phosphate dehydrogenase [NAD(P)+] (340 aa).

The NADPH site is built by Ser-11, Trp-12, Arg-33, and Lys-106. 3 residues coordinate sn-glycerol 3-phosphate: Lys-106, Gly-137, and Ser-139. Ala-141 is a binding site for NADPH. Residues Lys-192, Asp-245, Ser-255, Arg-256, and Asn-257 each contribute to the sn-glycerol 3-phosphate site. Lys-192 acts as the Proton acceptor in catalysis. Arg-256 lines the NADPH pocket. NADPH-binding residues include Val-280 and Glu-282.

Belongs to the NAD-dependent glycerol-3-phosphate dehydrogenase family.

Its subcellular location is the cytoplasm. It carries out the reaction sn-glycerol 3-phosphate + NAD(+) = dihydroxyacetone phosphate + NADH + H(+). The enzyme catalyses sn-glycerol 3-phosphate + NADP(+) = dihydroxyacetone phosphate + NADPH + H(+). The protein operates within membrane lipid metabolism; glycerophospholipid metabolism. Functionally, catalyzes the reduction of the glycolytic intermediate dihydroxyacetone phosphate (DHAP) to sn-glycerol 3-phosphate (G3P), the key precursor for phospholipid synthesis. This chain is Glycerol-3-phosphate dehydrogenase [NAD(P)+], found in Bacillus cereus (strain ATCC 10987 / NRS 248).